The sequence spans 208 residues: uncharacterized protein (208 aa).

4 consecutive 4Fe-4S ferredoxin-type domains span residues 59 to 88, 114 to 145, 147 to 176, and 174 to 203; these read GVLV…SVGT, GDLN…WQQK, GCIT…VNTE, and NTES…IIEW. Residues C68, C71, C74, C78, C123, C126, C131, C135, C156, C159, C162, C166, C183, C186, C189, and C193 each coordinate [4Fe-4S] cluster.

This is an uncharacterized protein from Escherichia coli O157:H7.